Here is a 426-residue protein sequence, read N- to C-terminus: CAAX prenyl protease 1 homolog (426 aa).

The Lumenal segment spans residues 1–3 (MVN). The helical transmembrane segment at 4-24 (YFIISISFFLLEHFYSFYLNF) threads the bilayer. Topologically, residues 25-70 (RQSKLLKNLTKVPEYCKDRITQEDFKKSQEYSKAKLDYKTLTSTIQ) are cytoplasmic. The helical transmembrane segment at 71-91 (VLTTLLSFYYPVYPYFWNLSL) threads the bilayer. Residues 92-106 (ELAEKIGYPNEIIRS) lie on the Lumenal side of the membrane. The helical transmembrane segment at 107 to 127 (CFFFAFTVGVSVITEIPFSYY) threads the bilayer. The Cytoplasmic portion of the chain corresponds to 128-150 (YQFILEEKFGYNRMTRTLFIKDK). A helical transmembrane segment spans residues 151 to 171 (IISTLLMIGFGLPILSLAIFI). Residues 172 to 178 (INWSGPQ) lie on the Lumenal side of the membrane. A helical transmembrane segment spans residues 179–199 (LWFYCWLLLVAITLLSITIYP). Residues 200 to 294 (TFIQPLFNKF…GHYKMSHTLK (95 aa)) are Cytoplasmic-facing. Residue H282 coordinates Zn(2+). E283 is an active-site residue. Position 286 (H286) interacts with Zn(2+). The chain crosses the membrane as a helical span at residues 295 to 315 (QMLLVQVHLVTLLYAFSLLIN). The Lumenal segment spans residues 316–333 (DDQLYQQFGFVSSKDSVL). Residues 334 to 354 (VGLTLFMFLYSPIDRIFSLLI) traverse the membrane as a helical segment. The Cytoplasmic portion of the chain corresponds to 355 to 426 (NIFSRKYEFQ…KVALYKLKNK (72 aa)). Residue E362 participates in Zn(2+) binding.

This sequence belongs to the peptidase M48B family. It depends on Zn(2+) as a cofactor.

The protein resides in the endoplasmic reticulum membrane. The catalysed reaction is Hydrolyzes the peptide bond -P2-(S-farnesyl or geranylgeranyl)C-P1'-P2'-P3'-COOH where P1' and P2' are amino acids with aliphatic side chains and P3' is any C-terminal residue.. Proteolytically removes the C-terminal three residues of farnesylated proteins. This chain is CAAX prenyl protease 1 homolog (zmpste24), found in Dictyostelium discoideum (Social amoeba).